A 148-amino-acid polypeptide reads, in one-letter code: Transcription antitermination protein NusB (148 aa).

It belongs to the NusB family.

Involved in transcription antitermination. Required for transcription of ribosomal RNA (rRNA) genes. Binds specifically to the boxA antiterminator sequence of the ribosomal RNA (rrn) operons. This Aquifex aeolicus (strain VF5) protein is Transcription antitermination protein NusB.